A 119-amino-acid polypeptide reads, in one-letter code: Protein TusC (119 aa).

It belongs to the DsrF/TusC family. In terms of assembly, heterohexamer, formed by a dimer of trimers. The hexameric TusBCD complex contains 2 copies each of TusB, TusC and TusD. The TusBCD complex interacts with TusE.

The protein localises to the cytoplasm. Functionally, part of a sulfur-relay system required for 2-thiolation of 5-methylaminomethyl-2-thiouridine (mnm(5)s(2)U) at tRNA wobble positions. The chain is Protein TusC from Buchnera aphidicola subsp. Baizongia pistaciae (strain Bp).